The following is an 869-amino-acid chain: Alanine--tRNA ligase (869 aa).

Zn(2+) is bound by residues His559, His563, Cys660, and His664.

Belongs to the class-II aminoacyl-tRNA synthetase family. Zn(2+) serves as cofactor.

The protein resides in the cytoplasm. The catalysed reaction is tRNA(Ala) + L-alanine + ATP = L-alanyl-tRNA(Ala) + AMP + diphosphate. In terms of biological role, catalyzes the attachment of alanine to tRNA(Ala) in a two-step reaction: alanine is first activated by ATP to form Ala-AMP and then transferred to the acceptor end of tRNA(Ala). Also edits incorrectly charged Ser-tRNA(Ala) and Gly-tRNA(Ala) via its editing domain. This chain is Alanine--tRNA ligase, found in Janthinobacterium sp. (strain Marseille) (Minibacterium massiliensis).